We begin with the raw amino-acid sequence, 627 residues long: uncharacterized protein (627 aa).

Disordered stretches follow at residues 141–187 and 490–510; these read LRYP…TPPS and ENEN…GPRT. The segment covering 491-510 has biased composition (polar residues); sequence NENTNGSANNSTYTNGGPRT. A Phosphoserine modification is found at Ser-559.

This is an uncharacterized protein from Saccharomyces cerevisiae (strain ATCC 204508 / S288c) (Baker's yeast).